A 176-amino-acid polypeptide reads, in one-letter code: Inner membrane-spanning protein YciB (176 aa).

5 helical membrane-spanning segments follow: residues 23-43 (MIAAAAVALVAGVVQAAFLYW), 50-70 (TMQWVGLVLIVVFGGATIVLG), 74-94 (FIMWKPTVLFWCGALFLLGSH), 119-139 (LTYMWVGFLIFMGIANWFVFT), and 150-170 (MFGSTALMLFFFIIQGIYLST).

It belongs to the YciB family.

The protein localises to the cell inner membrane. In terms of biological role, plays a role in cell envelope biogenesis, maintenance of cell envelope integrity and membrane homeostasis. This chain is Inner membrane-spanning protein YciB, found in Neisseria gonorrhoeae (strain ATCC 700825 / FA 1090).